The primary structure comprises 119 residues: Chorion class CA protein ERA.5 (119 aa).

A signal peptide spans 1 to 21; the sequence is MSTYTFVLFCLQICLIQNVYS. The left arm stretch occupies residues 22-55; that stretch reads QCLGRVGPGGPPVGPYGGPLGGPGYGPVGYGGCG. The central domain stretch occupies residues 56–103; the sequence is GYGGSGIGNVAVAGELPVAGSSAVMGQVPVIGAVEFAGPACAVGSVSI. The right arm stretch occupies residues 104 to 119; sequence SGACGPTCGCGGSPYY.

This sequence belongs to the chorion protein family.

Functionally, this protein is one of many from the eggshell of the silk moth. The polypeptide is Chorion class CA protein ERA.5 (ERA.5) (Bombyx mori (Silk moth)).